Consider the following 338-residue polypeptide: P2Y purinoceptor 14 (338 aa).

The Extracellular portion of the chain corresponds to 1–29 (MINSTSTQPPDESCSQNLLITQQIIPVLY). An N-linked (GlcNAc...) asparagine glycan is attached at N3. The helical transmembrane segment at 30-50 (CMVFIAGILLNGVSGWIFFYV) threads the bilayer. Over 51–55 (PSSKS) the chain is Cytoplasmic. Residues 56-76 (FIIYLKNIVIADFVMSLTFPF) traverse the membrane as a helical segment. Residues 77-96 (KILGDSGLGPWQLNVFVCRV) are Extracellular-facing. C94 and C172 are joined by a disulfide. A helical transmembrane segment spans residues 97–117 (SAVLFYVNMYVSIVFFGLISF). Residues 118 to 139 (DRYYKIVKPLWTSFIQSVSYSK) are Cytoplasmic-facing. The helical transmembrane segment at 140–160 (LLSVIVWMLMLLLAVPNIILT) threads the bilayer. An N-linked (GlcNAc...) asparagine glycan is attached at N161. Residues 161-188 (NQSVREVTQIKCIELKSELGRKWHKASN) lie on the Extracellular side of the membrane. Residues 189 to 209 (YIFVAIFWIVFLLLIVFYTAI) traverse the membrane as a helical segment. Topologically, residues 210 to 234 (TKKIFKSHLKSSRNSTSVKKKSSRN) are cytoplasmic. A helical transmembrane segment spans residues 235–255 (IFSIVFVFFVCFVPYHIARIP). The Extracellular portion of the chain corresponds to 256–278 (YTKSQTEAHYSCQSKEILRYMKE). Residues 279-299 (FTLLLSAANVCLDPIIYFFLC) traverse the membrane as a helical segment. Topologically, residues 300–338 (QPFREILCKKLHIPLKAQNDLDISRIKRGNTTLESTDTL) are cytoplasmic.

It belongs to the G-protein coupled receptor 1 family. As to expression, highest expression in the placenta, adipose tissue, stomach and intestine, intermediate levels in the brain, spleen, lung and heart, lowest levels in the kidney.

The protein localises to the cell membrane. Receptor for UDP-glucose and other UDP-sugar coupled to G-proteins. Not activated by ATP, ADP, UTP or ATP. The chain is P2Y purinoceptor 14 (P2RY14) from Homo sapiens (Human).